Here is a 204-residue protein sequence, read N- to C-terminus: Peptide deformylase (204 aa).

Residues Cys131 and His174 each contribute to the Fe cation site. The active site involves Glu175. His178 serves as a coordination point for Fe cation.

This sequence belongs to the polypeptide deformylase family. Fe(2+) is required as a cofactor.

It catalyses the reaction N-terminal N-formyl-L-methionyl-[peptide] + H2O = N-terminal L-methionyl-[peptide] + formate. In terms of biological role, removes the formyl group from the N-terminal Met of newly synthesized proteins. Requires at least a dipeptide for an efficient rate of reaction. N-terminal L-methionine is a prerequisite for activity but the enzyme has broad specificity at other positions. The protein is Peptide deformylase of Streptococcus pyogenes serotype M49 (strain NZ131).